We begin with the raw amino-acid sequence, 234 residues long: Large ribosomal subunit protein uL1 (234 aa).

Belongs to the universal ribosomal protein uL1 family. In terms of assembly, part of the 50S ribosomal subunit.

Its function is as follows. Binds directly to 23S rRNA. The L1 stalk is quite mobile in the ribosome, and is involved in E site tRNA release. Functionally, protein L1 is also a translational repressor protein, it controls the translation of the L11 operon by binding to its mRNA. This chain is Large ribosomal subunit protein uL1, found in Pseudoalteromonas translucida (strain TAC 125).